A 90-amino-acid polypeptide reads, in one-letter code: Probable Fe(2+)-trafficking protein (90 aa).

The protein belongs to the Fe(2+)-trafficking protein family.

Functionally, could be a mediator in iron transactions between iron acquisition and iron-requiring processes, such as synthesis and/or repair of Fe-S clusters in biosynthetic enzymes. The sequence is that of Probable Fe(2+)-trafficking protein from Pseudomonas fluorescens (strain ATCC BAA-477 / NRRL B-23932 / Pf-5).